A 576-amino-acid polypeptide reads, in one-letter code: uncharacterized protein (576 aa).

The span at 241-261 (DNTKAPSPTNTAGSRELSTPA) shows a compositional bias: polar residues. Positions 241–270 (DNTKAPSPTNTAGSRELSTPAGSPGKASLP) are disordered.

This is an uncharacterized protein from Bacillus subtilis (strain 168).